Consider the following 72-residue polypeptide: Protein kish-A (72 aa).

An N-terminal signal peptide occupies residues 1–26 (MSAIFNFQSLLTVILLLICTCAYIRS). Residues 27–53 (LTPSLLDKNKTGFLGIFWKCARIGERK) lie on the Extracellular side of the membrane. Residue N35 is glycosylated (N-linked (GlcNAc...) asparagine). Residues 54-71 (SPYVAFCCIVMALTILFS) traverse the membrane as a helical segment. E72 is a topological domain (cytoplasmic).

This sequence belongs to the KISH family.

It localises to the golgi apparatus membrane. In terms of biological role, involved in the early part of the secretory pathway. The protein is Protein kish-A (tmem167a) of Danio rerio (Zebrafish).